Reading from the N-terminus, the 311-residue chain is Arginine/serine-rich protein 1 (311 aa).

Positions 1–125 (MSTYVNDMWP…RSRSRSRGRS (125 aa)) are disordered. The residue at position 12 (Ser12) is a Phosphoserine. Low complexity predominate over residues 20–31 (STSRSGGSSRLS). Residues 32 to 123 (SRSRSRSFSR…RSRSRSRSRG (92 aa)) show a composition bias toward basic residues. 2 positions are modified to phosphoserine: Ser109 and Ser111. At Arg135 the chain carries Omega-N-methylarginine.

This sequence belongs to the RSRP family. In terms of processing, phosphorylated. Phosphorylation at Ser-109 and Ser-111 mediates the interaction with spliceosome proteins.

It localises to the nucleus. In terms of biological role, probably acts as a spliceosomal factor that contributes to spliceosome assembly and regulates the isoform switching of proteins such as PARP6. The polypeptide is Arginine/serine-rich protein 1 (RSRP1) (Pongo abelii (Sumatran orangutan)).